A 1155-amino-acid chain; its full sequence is Protein BREAST CANCER SUSCEPTIBILITY 2 homolog B (1155 aa).

4 BRCA2 repeats span residues 63–97, 116–150, 163–197, and 257–291; these read MPGE…ENVA, TAET…SDMI, FGVP…LEED, and LKVP…DPEL.

In terms of assembly, interacts with RAD51 and DMC1. Interacts with DSS1(I) and DSS1(V). Can interact with both RAD51 and DSS1(I) or both DMC1 and DSS1(I) in a tripartite complex. As to expression, expressed in flower buds.

Involved in double-strand break repair and/or homologous recombination by mediating RAD51- and DMC1-facilitated DNA repair. Plays an essential role in both somatic and meiotic homologous recombination. Is crucial for the formation of RAD51 and DMC1 foci during male meiotic homologous recombination in prophase I. This is Protein BREAST CANCER SUSCEPTIBILITY 2 homolog B from Arabidopsis thaliana (Mouse-ear cress).